Consider the following 363-residue polypeptide: 5-formaminoimidazole-4-carboxamide-1-(beta)-D-ribofuranosyl 5'-monophosphate synthetase (363 aa).

Residues His29 and Ser96 each coordinate 5-amino-1-(5-phospho-beta-D-ribosyl)imidazole-4-carboxamide. One can recognise an ATP-grasp domain in the interval 118-350 (RDILRWESER…MGRRVAREIR (233 aa)). Residues 148 to 210 (PEEI…TNFC) and Glu232 each bind ATP. Asn260 lines the 5-amino-1-(5-phospho-beta-D-ribosyl)imidazole-4-carboxamide pocket. Gln299 and Glu312 together coordinate Mg(2+).

This sequence belongs to the phosphohexose mutase family. Requires Mg(2+) as cofactor. Mn(2+) serves as cofactor.

The enzyme catalyses 5-amino-1-(5-phospho-beta-D-ribosyl)imidazole-4-carboxamide + formate + ATP = 5-formamido-1-(5-phospho-D-ribosyl)imidazole-4-carboxamide + ADP + phosphate. Its pathway is purine metabolism; IMP biosynthesis via de novo pathway; 5-formamido-1-(5-phospho-D-ribosyl)imidazole-4-carboxamide from 5-amino-1-(5-phospho-D-ribosyl)imidazole-4-carboxamide (formate route): step 1/1. In terms of biological role, catalyzes the ATP- and formate-dependent formylation of 5-aminoimidazole-4-carboxamide-1-beta-d-ribofuranosyl 5'-monophosphate (AICAR) to 5-formaminoimidazole-4-carboxamide-1-beta-d-ribofuranosyl 5'-monophosphate (FAICAR) in the absence of folates. The protein is 5-formaminoimidazole-4-carboxamide-1-(beta)-D-ribofuranosyl 5'-monophosphate synthetase of Methanothermobacter thermautotrophicus (strain ATCC 29096 / DSM 1053 / JCM 10044 / NBRC 100330 / Delta H) (Methanobacterium thermoautotrophicum).